We begin with the raw amino-acid sequence, 68 residues long: uncharacterized protein (68 aa).

It to bacterial proteins yidD.

This is an uncharacterized protein from Haemophilus influenzae (Bacteriophage HP1).